Consider the following 214-residue polypeptide: Outer-membrane lipoprotein LolB (214 aa).

The signal sequence occupies residues 1-30 (MKHVSSPHPCAAIASARVWLGLVLVALLAG). Residue Cys-31 is the site of N-palmitoyl cysteine attachment. A lipid anchor (S-diacylglycerol cysteine) is attached at Cys-31.

Belongs to the LolB family. As to quaternary structure, monomer.

The protein resides in the cell outer membrane. Functionally, plays a critical role in the incorporation of lipoproteins in the outer membrane after they are released by the LolA protein. The sequence is that of Outer-membrane lipoprotein LolB from Chromohalobacter salexigens (strain ATCC BAA-138 / DSM 3043 / CIP 106854 / NCIMB 13768 / 1H11).